The primary structure comprises 156 residues: Cell division protein SepF (156 aa).

The interval 30-49 (NAAAPSTTETSVVRQDDRPK) is disordered.

It belongs to the SepF family. In terms of assembly, homodimer. Interacts with FtsZ.

It localises to the cytoplasm. Functionally, cell division protein that is part of the divisome complex and is recruited early to the Z-ring. Probably stimulates Z-ring formation, perhaps through the cross-linking of FtsZ protofilaments. Its function overlaps with FtsA. The polypeptide is Cell division protein SepF (Exiguobacterium sp. (strain ATCC BAA-1283 / AT1b)).